We begin with the raw amino-acid sequence, 163 residues long: Large ribosomal subunit protein uL11 (163 aa).

Positions Met1–Gly25 are disordered.

This sequence belongs to the universal ribosomal protein uL11 family. In terms of assembly, part of the ribosomal stalk of the 50S ribosomal subunit. Interacts with L10 and the large rRNA to form the base of the stalk. L10 forms an elongated spine to which L12 dimers bind in a sequential fashion forming a multimeric L10(L12)X complex.

In terms of biological role, forms part of the ribosomal stalk which helps the ribosome interact with GTP-bound translation factors. The polypeptide is Large ribosomal subunit protein uL11 (Natronomonas pharaonis (strain ATCC 35678 / DSM 2160 / CIP 103997 / JCM 8858 / NBRC 14720 / NCIMB 2260 / Gabara) (Halobacterium pharaonis)).